A 244-amino-acid chain; its full sequence is Phosphoadenosine 5'-phosphosulfate reductase (244 aa).

Catalysis depends on Cys-239, which acts as the Nucleophile; cysteine thiosulfonate intermediate.

Belongs to the PAPS reductase family. CysH subfamily.

It is found in the cytoplasm. It carries out the reaction [thioredoxin]-disulfide + sulfite + adenosine 3',5'-bisphosphate + 2 H(+) = [thioredoxin]-dithiol + 3'-phosphoadenylyl sulfate. It participates in sulfur metabolism; hydrogen sulfide biosynthesis; sulfite from sulfate: step 3/3. Catalyzes the formation of sulfite from phosphoadenosine 5'-phosphosulfate (PAPS) using thioredoxin as an electron donor. This is Phosphoadenosine 5'-phosphosulfate reductase from Salmonella dublin (strain CT_02021853).